Reading from the N-terminus, the 454-residue chain is Bifunctional protein GlmU (454 aa).

The segment at 1–231 (MDRATVSLIV…EAETLGVNTR (231 aa)) is pyrophosphorylase. Residues 11–14 (LAAG), K25, Q78, 83–84 (GT), 106–108 (YGD), G143, E157, N172, and N229 contribute to the UDP-N-acetyl-alpha-D-glucosamine site. D108 serves as a coordination point for Mg(2+). N229 is a Mg(2+) binding site. The tract at residues 232–252 (AQLAEAEAEFQKRARAAALED) is linker. The tract at residues 253–454 (GVTLTAPDTV…AKAAKKKEAP (202 aa)) is N-acetyltransferase. R318 and K336 together coordinate UDP-N-acetyl-alpha-D-glucosamine. H348 functions as the Proton acceptor in the catalytic mechanism. 2 residues coordinate UDP-N-acetyl-alpha-D-glucosamine: Y351 and N362. Acetyl-CoA is bound by residues A365, 371–372 (NY), S390, S408, and R425.

The protein in the N-terminal section; belongs to the N-acetylglucosamine-1-phosphate uridyltransferase family. This sequence in the C-terminal section; belongs to the transferase hexapeptide repeat family. Homotrimer. Mg(2+) serves as cofactor.

The protein localises to the cytoplasm. The enzyme catalyses alpha-D-glucosamine 1-phosphate + acetyl-CoA = N-acetyl-alpha-D-glucosamine 1-phosphate + CoA + H(+). It catalyses the reaction N-acetyl-alpha-D-glucosamine 1-phosphate + UTP + H(+) = UDP-N-acetyl-alpha-D-glucosamine + diphosphate. It functions in the pathway nucleotide-sugar biosynthesis; UDP-N-acetyl-alpha-D-glucosamine biosynthesis; N-acetyl-alpha-D-glucosamine 1-phosphate from alpha-D-glucosamine 6-phosphate (route II): step 2/2. Its pathway is nucleotide-sugar biosynthesis; UDP-N-acetyl-alpha-D-glucosamine biosynthesis; UDP-N-acetyl-alpha-D-glucosamine from N-acetyl-alpha-D-glucosamine 1-phosphate: step 1/1. It participates in bacterial outer membrane biogenesis; LPS lipid A biosynthesis. Functionally, catalyzes the last two sequential reactions in the de novo biosynthetic pathway for UDP-N-acetylglucosamine (UDP-GlcNAc). The C-terminal domain catalyzes the transfer of acetyl group from acetyl coenzyme A to glucosamine-1-phosphate (GlcN-1-P) to produce N-acetylglucosamine-1-phosphate (GlcNAc-1-P), which is converted into UDP-GlcNAc by the transfer of uridine 5-monophosphate (from uridine 5-triphosphate), a reaction catalyzed by the N-terminal domain. In Cereibacter sphaeroides (strain ATCC 17023 / DSM 158 / JCM 6121 / CCUG 31486 / LMG 2827 / NBRC 12203 / NCIMB 8253 / ATH 2.4.1.) (Rhodobacter sphaeroides), this protein is Bifunctional protein GlmU.